The chain runs to 397 residues: Protein EMSY-LIKE 3 (397 aa).

The interval 1–40 (MDYRPSDSSGTDDDLPPSHQGRYQRNARPTGNGRPSVLNS) is disordered. The ENT domain maps to 50-137 (METQIHLIEQ…PQLVHDAPSP (88 aa)). Positions 81–107 (ESLITELRKELRVSDEEHRELLSRVNA) form a coiled coil. 2 disordered regions span residues 122–221 (SLQS…SYDP) and 284–330 (DPGI…TQNG). Polar residues predominate over residues 164-174 (LHPSMQPSSSA). Residues 175 to 182 (LRRGGPPP) carry the Nuclear localization signal motif. Residues 363–389 (AEVEKAKRVLRDHELALMDAIAKLEEI) are a coiled coil. Residue Ser390 is modified to Phosphoserine.

The protein localises to the nucleus. Probably involved in the regulation of chromatin states. Contributes to basal immunity. The protein is Protein EMSY-LIKE 3 of Arabidopsis thaliana (Mouse-ear cress).